Here is a 475-residue protein sequence, read N- to C-terminus: MRPLDENLRTSAASRPAQSLSVRGQPEAESGAFGEAIADAGRRRTQGQGGRTSADDPRRDSVANGGNASAVPKADGFGADVPASMADAASPDARPASERAITTRDQAAKRLQHGHPAGTTPLSLGRDGAGEETAEPVEPAAAHSRETVHALRDAIDEASGMTATEGDENAEPVGGTVSDLLSMLTGAAPAVAAALQPEGRAKPASAVRDGSDGPAKAVGGISPDVADGAHPQTGDGTGGSEPDRLFRFARADGKGQVVSMSISRDGERAVVENSRSSVKPGVETVTVLEARRYLGLAVNENATSVTTAIAGDSGWAEALQSSAATTKPEAWSQAGKTLNTLKIQMHPVDLGMVTATLRLKDDELQVDLKVETGEAFRQLRDDQSEMVKALRAQGFAVDQVNIVFNGGGDSASGGGGQSQAQAQLGYEGRERAGDDGQGRQPRDGGRAATERWAGNDATDDVPDGAERSRAGHVYM.

Disordered regions lie at residues 1-175, 195-243, and 408-475; these read MRPL…PVGG, LQPE…SEPD, and GDSA…HVYM. Residues 9–22 show a composition bias toward polar residues; it reads RTSAASRPAQSLSV. Low complexity predominate over residues 79–100; that stretch reads ADVPASMADAASPDARPASERA. A compositionally biased stretch (basic and acidic residues) spans 143–155; sequence HSRETVHALRDAI. Over residues 408–417 the composition is skewed to gly residues; that stretch reads GDSASGGGGQ. Positions 427–449 are enriched in basic and acidic residues; sequence EGRERAGDDGQGRQPRDGGRAAT.

It localises to the cytoplasm. Functionally, required for the rotation of the flagellar motor. Has a positive effect as flagellar rotation increases when an excess of motd is present. The chain is Chemotaxis protein MotD (motD) from Rhizobium meliloti (Ensifer meliloti).